Consider the following 206-residue polypeptide: Small ribosomal subunit protein uS4 (206 aa).

One can recognise an S4 RNA-binding domain in the interval 96 to 156 (GRLDNVVYRM…EKSKKQARIK (61 aa)).

It belongs to the universal ribosomal protein uS4 family. In terms of assembly, part of the 30S ribosomal subunit. Contacts protein S5. The interaction surface between S4 and S5 is involved in control of translational fidelity.

Functionally, one of the primary rRNA binding proteins, it binds directly to 16S rRNA where it nucleates assembly of the body of the 30S subunit. In terms of biological role, with S5 and S12 plays an important role in translational accuracy. This Glaesserella parasuis serovar 5 (strain SH0165) (Haemophilus parasuis) protein is Small ribosomal subunit protein uS4.